We begin with the raw amino-acid sequence, 37 residues long: Large ribosomal subunit protein bL36 (37 aa).

It belongs to the bacterial ribosomal protein bL36 family.

The polypeptide is Large ribosomal subunit protein bL36 (Salinispora tropica (strain ATCC BAA-916 / DSM 44818 / JCM 13857 / NBRC 105044 / CNB-440)).